The chain runs to 630 residues: Zinc finger protein 37 homolog (630 aa).

Disordered stretches follow at residues 1–45, 77–172, and 193–285; these read MSVS…SAAE, KPDM…PSKK, and HSRN…KHEK. Residues 14–30 are compositionally biased toward basic and acidic residues; the sequence is ETVDRRRSAETTKEAGR. A KRAB domain is found at 32 to 103; the sequence is LEMAVSEPEA…KGKRPSQGCP (72 aa). Ser42 carries the phosphoserine modification. Basic and acidic residues predominate over residues 110–122; the sequence is KQKETDGKVQKDD. Positions 161–172 are enriched in basic residues; it reads NNLHKKHVPSKK. Residues 193-206 show a composition bias toward basic and acidic residues; the sequence is HSRNCVKRKSDAAK. Basic residues predominate over residues 221–231; the sequence is KGKKQTGKKHE. Basic and acidic residues-rich tracts occupy residues 232–243 and 260–274; these read KLSSHSSSDKCN and IKQD…HEKS. 2 C2H2-type zinc fingers span residues 293–315 and 321–343; these read YECN…QRVH and YECN…QRTH. The segment at 349–367 adopts a C2H2-type 3; atypical zinc-finger fold; sequence YECIQCGKAHGHKHALTDH. 9 C2H2-type zinc fingers span residues 377-399, 405-427, 433-455, 461-483, 489-511, 517-539, 545-567, 573-595, and 601-623; these read YECA…VRSH, YECK…VRTH, YECN…MRIH, FECN…QRTH, YKCN…MRTH, FECN…QRVH, YECN…QRTH, YECN…QRSH, and YECN…VKTH.

Belongs to the krueppel C2H2-type zinc-finger protein family. Expressed at low level in several tissues including fetal cartilage.

Its subcellular location is the nucleus. May be involved in transcriptional regulation. This is Zinc finger protein 37 homolog (ZFP37) from Homo sapiens (Human).